The chain runs to 267 residues: Glutamate racemase (267 aa).

Residues 9–10 and 41–42 contribute to the substrate site; these read DS and YG. Cys-72 serves as the catalytic Proton donor/acceptor. Residue 73–74 participates in substrate binding; that stretch reads NT. Catalysis depends on Cys-184, which acts as the Proton donor/acceptor. 185 to 186 contacts substrate; it reads TH.

The protein belongs to the aspartate/glutamate racemases family.

It catalyses the reaction L-glutamate = D-glutamate. It participates in cell wall biogenesis; peptidoglycan biosynthesis. Provides the (R)-glutamate required for cell wall biosynthesis. The chain is Glutamate racemase from Staphylococcus epidermidis (strain ATCC 12228 / FDA PCI 1200).